Here is a 666-residue protein sequence, read N- to C-terminus: ATP synthase subunit alpha 2 (666 aa).

Position 182 to 189 (182 to 189 (GDRATGKT)) interacts with ATP. Residues 527-666 (MPAEDAAGDI…DAEAEARHKR (140 aa)) are disordered. Positions 545–590 (ARGDADRDADHGANREVSREVSPEASREVSREVSCEVSHEADRDAA) are enriched in basic and acidic residues. Positions 591–601 (ADAARVAGRAP) are enriched in low complexity. Positions 623–641 (ADGDRASASRPRPDARGDA) are enriched in basic and acidic residues.

The protein belongs to the ATPase alpha/beta chains family. In terms of assembly, F-type ATPases have 2 components, CF(1) - the catalytic core - and CF(0) - the membrane proton channel. CF(1) has five subunits: alpha(3), beta(3), gamma(1), delta(1), epsilon(1). CF(0) has three main subunits: a(1), b(2) and c(9-12). The alpha and beta chains form an alternating ring which encloses part of the gamma chain. CF(1) is attached to CF(0) by a central stalk formed by the gamma and epsilon chains, while a peripheral stalk is formed by the delta and b chains.

Its subcellular location is the cell inner membrane. It catalyses the reaction ATP + H2O + 4 H(+)(in) = ADP + phosphate + 5 H(+)(out). Its function is as follows. Produces ATP from ADP in the presence of a proton gradient across the membrane. The alpha chain is a regulatory subunit. The protein is ATP synthase subunit alpha 2 of Burkholderia pseudomallei (strain K96243).